Here is a 176-residue protein sequence, read N- to C-terminus: Peptide methionine sulfoxide reductase MsrA (176 aa).

The active site involves Cys-10.

Belongs to the MsrA Met sulfoxide reductase family.

It catalyses the reaction L-methionyl-[protein] + [thioredoxin]-disulfide + H2O = L-methionyl-(S)-S-oxide-[protein] + [thioredoxin]-dithiol. It carries out the reaction [thioredoxin]-disulfide + L-methionine + H2O = L-methionine (S)-S-oxide + [thioredoxin]-dithiol. Its function is as follows. Has an important function as a repair enzyme for proteins that have been inactivated by oxidation. Catalyzes the reversible oxidation-reduction of methionine sulfoxide in proteins to methionine. In Chromobacterium violaceum (strain ATCC 12472 / DSM 30191 / JCM 1249 / CCUG 213 / NBRC 12614 / NCIMB 9131 / NCTC 9757 / MK), this protein is Peptide methionine sulfoxide reductase MsrA.